A 171-amino-acid chain; its full sequence is Shikimate kinase (171 aa).

11 to 16 (GTGKTT) serves as a coordination point for ATP. T15 provides a ligand contact to Mg(2+). 3 residues coordinate substrate: D33, R57, and G79. R117 is an ATP binding site. R136 serves as a coordination point for substrate.

The protein belongs to the shikimate kinase family. Monomer. Mg(2+) serves as cofactor.

The protein localises to the cytoplasm. The enzyme catalyses shikimate + ATP = 3-phosphoshikimate + ADP + H(+). It participates in metabolic intermediate biosynthesis; chorismate biosynthesis; chorismate from D-erythrose 4-phosphate and phosphoenolpyruvate: step 5/7. Catalyzes the specific phosphorylation of the 3-hydroxyl group of shikimic acid using ATP as a cosubstrate. The sequence is that of Shikimate kinase from Caldanaerobacter subterraneus subsp. tengcongensis (strain DSM 15242 / JCM 11007 / NBRC 100824 / MB4) (Thermoanaerobacter tengcongensis).